The chain runs to 94 residues: Pyrimidine/purine nucleoside phosphorylase (94 aa).

It belongs to the nucleoside phosphorylase PpnP family.

It carries out the reaction a purine D-ribonucleoside + phosphate = a purine nucleobase + alpha-D-ribose 1-phosphate. The catalysed reaction is adenosine + phosphate = alpha-D-ribose 1-phosphate + adenine. The enzyme catalyses cytidine + phosphate = cytosine + alpha-D-ribose 1-phosphate. It catalyses the reaction guanosine + phosphate = alpha-D-ribose 1-phosphate + guanine. It carries out the reaction inosine + phosphate = alpha-D-ribose 1-phosphate + hypoxanthine. The catalysed reaction is thymidine + phosphate = 2-deoxy-alpha-D-ribose 1-phosphate + thymine. The enzyme catalyses uridine + phosphate = alpha-D-ribose 1-phosphate + uracil. It catalyses the reaction xanthosine + phosphate = alpha-D-ribose 1-phosphate + xanthine. In terms of biological role, catalyzes the phosphorolysis of diverse nucleosides, yielding D-ribose 1-phosphate and the respective free bases. Can use uridine, adenosine, guanosine, cytidine, thymidine, inosine and xanthosine as substrates. Also catalyzes the reverse reactions. This chain is Pyrimidine/purine nucleoside phosphorylase, found in Cronobacter sakazakii (strain ATCC BAA-894) (Enterobacter sakazakii).